We begin with the raw amino-acid sequence, 94 residues long: Large ribosomal subunit protein bL27 (94 aa).

Residues 1–9 constitute a propeptide that is removed on maturation; that stretch reads MLKLNLQFF.

The protein belongs to the bacterial ribosomal protein bL27 family. The N-terminus is cleaved by ribosomal processing cysteine protease Prp.

The chain is Large ribosomal subunit protein bL27 from Staphylococcus aureus (strain Mu3 / ATCC 700698).